Consider the following 942-residue polypeptide: Zinc finger protein 865 (942 aa).

Residues 66–106 (FASTSTSKPKEFKVEAPPSSSLSPSKKPDIATTQQFNNQPP) are disordered. Residues 96 to 106 (ATTQQFNNQPP) are compositionally biased toward polar residues. 20 consecutive C2H2-type zinc fingers follow at residues 172–194 (FPCT…MLVH), 200–222 (YECN…RRCH), 282–304 (FTCT…QIIH), 310–332 (FSCS…VKTH), 338–360 (VQCE…QATH), 367–389 (YKCE…KQVH), 466–488 (FCCN…ERIH), 494–516 (HQCS…HVVH), 522–544 (YKCE…KQIH), 564–586 (FGCT…KELH), 592–614 (YVCD…KLVH), 678–700 (FSCS…KYVH), 706–728 (LACN…RRTH), 734–756 (FTCS…QRCH), 762–784 (YRCT…KVVH), 790–812 (YKCA…QRLH), 818–840 (QRCP…QRVH), 846–868 (YRCD…QRSH), 874–896 (LRCS…VQTH), and 902–924 (FKCG…RHAH).

It belongs to the krueppel C2H2-type zinc-finger protein family.

It localises to the nucleus. Functionally, may be involved in transcriptional regulation. The chain is Zinc finger protein 865 (znf865) from Xenopus tropicalis (Western clawed frog).